A 227-amino-acid chain; its full sequence is Enolase-phosphatase E1 (227 aa).

The Mg(2+) site is built by aspartate 11 and glutamate 13. Substrate-binding positions include serine 118 to serine 119 and lysine 161. Aspartate 186 lines the Mg(2+) pocket.

This sequence belongs to the HAD-like hydrolase superfamily. MasA/MtnC family. In terms of assembly, monomer. Requires Mg(2+) as cofactor.

The protein resides in the cytoplasm. It is found in the nucleus. It catalyses the reaction 5-methylsulfanyl-2,3-dioxopentyl phosphate + H2O = 1,2-dihydroxy-5-(methylsulfanyl)pent-1-en-3-one + phosphate. Its pathway is amino-acid biosynthesis; L-methionine biosynthesis via salvage pathway; L-methionine from S-methyl-5-thio-alpha-D-ribose 1-phosphate: step 3/6. It functions in the pathway amino-acid biosynthesis; L-methionine biosynthesis via salvage pathway; L-methionine from S-methyl-5-thio-alpha-D-ribose 1-phosphate: step 4/6. In terms of biological role, bifunctional enzyme that catalyzes the enolization of 2,3-diketo-5-methylthiopentyl-1-phosphate (DK-MTP-1-P) into the intermediate 2-hydroxy-3-keto-5-methylthiopentenyl-1-phosphate (HK-MTPenyl-1-P), which is then dephosphorylated to form the acireductone 1,2-dihydroxy-3-keto-5-methylthiopentene (DHK-MTPene). The protein is Enolase-phosphatase E1 of Saccharomyces cerevisiae (strain RM11-1a) (Baker's yeast).